Consider the following 943-residue polypeptide: AP-1 complex subunit beta-1 (943 aa).

Residue lysine 318 is modified to N6-acetyllysine. Tyrosine 574 carries the post-translational modification 3'-nitrotyrosine. Residues glycine 584–valine 621 form a disordered region. Positions proline 594 to glycine 616 are enriched in low complexity.

This sequence belongs to the adaptor complexes large subunit family. Adaptor protein complex 1 (AP-1) is a heterotetramer composed of two large adaptins (gamma-type subunit AP1G1 and beta-type subunit AP1B1), a medium adaptin (mu-type subunit AP1M1 or AP1M2) and a small adaptin (sigma-type subunit AP1S1 or AP1S2 or AP1S3). As to expression, widely expressed.

Its subcellular location is the cytoplasmic vesicle. It localises to the clathrin-coated vesicle membrane. The protein resides in the golgi apparatus. In terms of biological role, subunit of clathrin-associated adaptor protein complex 1 that plays a role in protein sorting in the late-Golgi/trans-Golgi network (TGN) and/or endosomes. The AP complexes mediate both the recruitment of clathrin to membranes and the recognition of sorting signals within the cytosolic tails of transmembrane cargo molecules. The polypeptide is AP-1 complex subunit beta-1 (Ap1b1) (Mus musculus (Mouse)).